The chain runs to 414 residues: Phosphoglycerate kinase (414 aa).

Substrate-binding positions include 20–22, arginine 37, 60–63, arginine 117, and arginine 164; these read DIN and HQSR. ATP-binding positions include glutamate 338 and 364-367; that span reads GGHL.

This sequence belongs to the phosphoglycerate kinase family. As to quaternary structure, monomer.

The protein localises to the cytoplasm. The enzyme catalyses (2R)-3-phosphoglycerate + ATP = (2R)-3-phospho-glyceroyl phosphate + ADP. Its pathway is carbohydrate degradation; glycolysis; pyruvate from D-glyceraldehyde 3-phosphate: step 2/5. In Methanococcus maripaludis (strain DSM 14266 / JCM 13030 / NBRC 101832 / S2 / LL), this protein is Phosphoglycerate kinase.